Reading from the N-terminus, the 1852-residue chain is MEPPSPQDEGLRKKQPKKPVPEILPRPPRALFCLTLQNPLRKACISIVEWKPFETIILLTIFANCVALAVYLPMPEDDNNTLNLGLEKLEYFFLIVFSIEAAMKIIAYGFLFHQDAYLRSGWNVLDFIIVFLGVFTVILEQVNIIQTNTAPMSSKGAGLDVKALRAFRVLRPLRLVSGVPSLQVVLNSIFKAMLPLFHIALLVLFMVIIYAIIGLELFKGKMHKTCYFIGTDIVATVENEKPSPCARTGSGRPCTINGSECRGGWPGPNHGITHFDNFGFSMLTVYQCISMEGWTDVLYWVNDAIGNEWPWIYFVTLILLGSFFILNLVLGVLSGEFTKEREKAKSRGTFQKLREKQQLEEDLRGYMSWITQGEVMDVDDLREGKLSLDEGGSDTESLYEIEGLNKIIQFIRHWRQWNRVFRWKCHDLVKSKVFYWLVILIVALNTLSIASEHHNQPLWLTHLQDVANRVLLTLFTIEMLMKMYGLGLRQYFMSIFNRFDCFVVCSGILEILLVESGAMSPLGISVLRCIRLLRLFKITKYWTSLSNLVASLLNSIRSIASLLLLLFLFIIIFALLGMQLFGGRYDFEDTEVRRSNFDNFPQALISVFQVLTGEDWNSVMYNGIMAYGGPTYPGVLVCIYFIILFVCGNYILLNVFLAIAVDNLAEAESLTSAQKAKAEERKRRKMSKGLPDKSEEERATVTKKLEQKSKGEGIPTTAKLKIDEFESNVNEVKDPYPSADFPGDDEEDEPEIPVSPRPRPLAELQLKEKAVPIPEASSFFIFSPTNKIRVLCHRIVNATWFTNFILLFILLSSAALAAEDPIRADSMRNQILEYFDYVFTAVFTVEIVLKMTTYGAFLHKGSFCRNYFNILDLLVVAVSLISMGLESSAISVVKILRVLRVLRPLRAINRAKGLKHVVQCVFVAIRTIGNIVLVTTLLQFMFACIGVQLFKGKFYSCNDLSKMTEEECRGYYYIYKDGDPTQIELRPRQWIHNDFHFDNVLSAMMSLFTVSTFEGWPQLLYKAIDSNEEDTGPVYNNRVEMAIFFIIYIILIAFFMMNIFVGFVIVTFQEQGETEYKNCELDKNQRQCVQYALKARPLRCYIPKNPYQYQVWYVVTSSYFEYLMFALIMLNTICLGMQHYNQSEQMNHISDILNVAFTIIFTLEMVLKLIAFKPRGYFGDPWNVFDFLIVIGSIIDVILSEIDTFLASSGGLYCLGGGCGNVDPDESARISSAFFRLFRVMRLVKLLNRAEGVRTLLWTFIKSFQALPYVALLIVMLFFIYAVIGMQMFGKIAMVDGTQINRNNNFQTFPQAVLLLFRCATGEAWQEILLACSYGKLCDPESDYAPGEEHTCGTNFAYYYFISFYMLCAFLIINLFVAVIMDNFDYLTRDWSILGPHHLDEFKAIWAEYDPEAKGRIKHLDVVTLLRRIQPPLGFGKFCPHRVACKRLVGMNMPLNSDGTVTFNATLFALVRTALKIKTEGNFEQANEELRAIIKKIWKRTSMKLLDQVIPPIGDDEVTVGKFYATFLIQEHFRKFMKRQEEYYGYRPKKDTVQIQAGLRTIEEEAAPEIHRAISGDLTAEEELERAMVEAAMEEGIFRRTGGLFGQVDNFLERTNSLPPVMANQRPLQFAEIEMEELESPVFLEDFPQNPGTHPLARANTNNANANVAYGNSSHRNNPVFSSICYEREFLGEADMPVTREGPLSQPCRASGPHSRSHVDKLKRPMTQRGMPEGQVPPSPCQVTGAKAEHPVQKEGKGPTSRFLETPNSRNFEEHVPRNSAHRCTAPATAMLIQEALVRGGLDSLAADANFVMATGQALADACQMEPEEVEVAATELLKQESPEGGAVPWEP.

The segment at 1–23 (MEPPSPQDEGLRKKQPKKPVPEI) is disordered. At 1 to 51 (MEPPSPQDEGLRKKQPKKPVPEILPRPPRALFCLTLQNPLRKACISIVEWK) the chain is on the cytoplasmic side. The I repeat unit spans residues 38–337 (NPLRKACISI…LVLGVLSGEF (300 aa)). Residues 52–70 (PFETIILLTIFANCVALAV) traverse the membrane as a helical segment. At 71 to 85 (YLPMPEDDNNTLNLG) the chain is on the extracellular side. Asparagine 79 carries an N-linked (GlcNAc...) asparagine glycan. Residues 86 to 106 (LEKLEYFFLIVFSIEAAMKII) traverse the membrane as a helical segment. The Cytoplasmic segment spans residues 107-115 (AYGFLFHQD). A helical transmembrane segment spans residues 116–136 (AYLRSGWNVLDFIIVFLGVFT). At 137–160 (VILEQVNIIQTNTAPMSSKGAGLD) the chain is on the extracellular side. A helical membrane pass occupies residues 161–179 (VKALRAFRVLRPLRLVSGV). Over 180–196 (PSLQVVLNSIFKAMLPL) the chain is Cytoplasmic. A helical membrane pass occupies residues 197-218 (FHIALLVLFMVIIYAIIGLELF). At 219–279 (KGKMHKTCYF…HGITHFDNFG (61 aa)) the chain is on the extracellular side. Cystine bridges form between cysteine 226-cysteine 254 and cysteine 245-cysteine 261. The N-linked (GlcNAc...) asparagine glycan is linked to asparagine 257. The pore-forming intramembrane region spans 280–301 (FSMLTVYQCISMEGWTDVLYWV). The Selectivity filter of repeat I signature appears at 290-293 (SMEG). Glutamate 292 lines the Ca(2+) pocket. At 302–309 (NDAIGNEW) the chain is on the extracellular side. The helical transmembrane segment at 310–330 (PWIYFVTLILLGSFFILNLVL) threads the bilayer. Over 331–432 (GVLSGEFTKE…WKCHDLVKSK (102 aa)) the chain is Cytoplasmic. The binding to the beta subunit stretch occupies residues 357 to 374 (QQLEEDLRGYMSWITQGE). Phosphoserine is present on residues serine 393 and serine 397. The II repeat unit spans residues 418–664 (NRVFRWKCHD…VFLAIAVDNL (247 aa)). A helical membrane pass occupies residues 433-451 (VFYWLVILIVALNTLSIAS). Topologically, residues 452–462 (EHHNQPLWLTH) are extracellular. A helical transmembrane segment spans residues 463–483 (LQDVANRVLLTLFTIEMLMKM). The Cytoplasmic segment spans residues 484–494 (YGLGLRQYFMS). A helical transmembrane segment spans residues 495–514 (IFNRFDCFVVCSGILEILLV). The Extracellular segment spans residues 515 to 523 (ESGAMSPLG). Residues 524–542 (ISVLRCIRLLRLFKITKYW) traverse the membrane as a helical segment. Over 543 to 561 (TSLSNLVASLLNSIRSIAS) the chain is Cytoplasmic. A helical membrane pass occupies residues 562–581 (LLLLLFLFIIIFALLGMQLF). Over 582-601 (GGRYDFEDTEVRRSNFDNFP) the chain is Extracellular. Positions 602 to 623 (QALISVFQVLTGEDWNSVMYNG) form an intramembrane region, pore-forming. The short motif at 612-615 (TGED) is the Selectivity filter of repeat II element. Glutamate 614 is a Ca(2+) binding site. The Extracellular segment spans residues 624-633 (IMAYGGPTYP). The chain crosses the membrane as a helical span at residues 634–653 (GVLVCIYFIILFVCGNYILL). Residues 654–799 (NVFLAIAVDN…VLCHRIVNAT (146 aa)) are Cytoplasmic-facing. Disordered regions lie at residues 675 to 712 (KAKA…SKGE) and 731 to 757 (EVKD…VSPR). Serine 687 is modified (phosphoserine; by PKA). Residues 690 to 711 (LPDKSEEERATVTKKLEQKSKG) show a composition bias toward basic and acidic residues. Residues 742–751 (PGDDEEDEPE) are compositionally biased toward acidic residues. One copy of the III repeat lies at 768 to 1068 (EKAVPIPEAS…IFVGFVIVTF (301 aa)). The chain crosses the membrane as a helical span at residues 800-818 (WFTNFILLFILLSSAALAA). Over 819–830 (EDPIRADSMRNQ) the chain is Extracellular. The chain crosses the membrane as a helical span at residues 831 to 850 (ILEYFDYVFTAVFTVEIVLK). At 851–866 (MTTYGAFLHKGSFCRN) the chain is on the cytoplasmic side. A helical membrane pass occupies residues 867 to 885 (YFNILDLLVVAVSLISMGL). Residues 886–892 (ESSAISV) are Extracellular-facing. A helical membrane pass occupies residues 893–911 (VKILRVLRVLRPLRAINRA). Residues 912–930 (KGLKHVVQCVFVAIRTIGN) lie on the Cytoplasmic side of the membrane. Residues 931-950 (IVLVTTLLQFMFACIGVQLF) traverse the membrane as a helical segment. Residues 951-1000 (KGKFYSCNDLSKMTEEECRGYYYIYKDGDPTQIELRPRQWIHNDFHFDNV) lie on the Extracellular side of the membrane. Cysteine 957 and cysteine 968 are disulfide-bonded. Residues 988 to 1077 (RQWIHNDFHF…FQEQGETEYK (90 aa)) form a dihydropyridine binding region. Positions 1001 to 1021 (LSAMMSLFTVSTFEGWPQLLY) form an intramembrane region, pore-forming. Residues 1012 to 1015 (TFEG) carry the Selectivity filter of repeat III motif. Glutamate 1014 provides a ligand contact to Ca(2+). Residues 1022-1038 (KAIDSNEEDTGPVYNNR) lie on the Extracellular side of the membrane. The helical transmembrane segment at 1039–1060 (VEMAIFFIIYIILIAFFMMNIF) threads the bilayer. Residues 1061–1118 (VGFVIVTFQEQGETEYKNCELDKNQRQCVQYALKARPLRCYIPKNPYQYQVWYVVTSS) are Cytoplasmic-facing. Residues 1105–1384 (NPYQYQVWYV…LFVAVIMDNF (280 aa)) form an IV repeat. Residues 1119–1140 (YFEYLMFALIMLNTICLGMQHY) traverse the membrane as a helical segment. Asparagine 1141 carries an N-linked (GlcNAc...) asparagine glycan. Over 1141–1148 (NQSEQMNH) the chain is Extracellular. Residues 1149-1170 (ISDILNVAFTIIFTLEMVLKLI) traverse the membrane as a helical segment. Residues 1171–1180 (AFKPRGYFGD) lie on the Cytoplasmic side of the membrane. A helical membrane pass occupies residues 1181–1200 (PWNVFDFLIVIGSIIDVILS). The Extracellular portion of the chain corresponds to 1201–1231 (EIDTFLASSGGLYCLGGGCGNVDPDESARIS). The helical transmembrane segment at 1232–1250 (SAFFRLFRVMRLVKLLNRA) threads the bilayer. Residues 1251–1268 (EGVRTLLWTFIKSFQALP) are Cytoplasmic-facing. A helical membrane pass occupies residues 1269 to 1289 (YVALLIVMLFFIYAVIGMQMF). At 1290 to 1311 (GKIAMVDGTQINRNNNFQTFPQ) the chain is on the extracellular side. The segment at residues 1312–1330 (AVLLLFRCATGEAWQEILL) is an intramembrane region (pore-forming). The short motif at 1321–1324 (TGEA) is the Selectivity filter of repeat IV element. Residues 1331 to 1356 (ACSYGKLCDPESDYAPGEEHTCGTNF) lie on the Extracellular side of the membrane. The tract at residues 1337 to 1403 (LCDPESDYAP…LGPHHLDEFK (67 aa)) is dihydropyridine binding. The cysteines at positions 1338 and 1352 are disulfide-linked. 2 phenylalkylamine binding regions span residues 1349–1391 (EHTC…TRDW) and 1349–1392 (EHTC…RDWS). A helical transmembrane segment spans residues 1357–1381 (AYYYFISFYMLCAFLIINLFVAVIM). Residues 1382–1852 (DNFDYLTRDW…PEGGAVPWEP (471 aa)) are Cytoplasmic-facing. Residues 1522-1542 (KFYATFLIQEHFRKFMKRQEE) are interaction with calmodulin. Position 1575 is a phosphoserine; by PKA and CAMK2 (serine 1575). Threonine 1579 bears the Phosphothreonine mark. Residue serine 1617 is modified to Phosphoserine; by PKA. Disordered regions lie at residues 1702-1721 (GPLS…HVDK) and 1727-1762 (TQRG…PTSR). The span at 1747–1757 (KAEHPVQKEGK) shows a compositional bias: basic and acidic residues.

Belongs to the calcium channel alpha-1 subunit (TC 1.A.1.11) family. CACNA1S subfamily. As to quaternary structure, component of a calcium channel complex consisting of a pore-forming alpha subunit (CACNA1S) and the ancillary subunits CACNB1 or CACNB2, CACNG1 and CACNA2D1. The channel complex contains alpha, beta, gamma and delta subunits in a 1:1:1:1 ratio, i.e. it contains either CACNB1 or CACNB2. CACNA1S channel activity is modulated by the auxiliary subunits (CACNB1 or CACNB2, CACNG1 and CACNA2D1). Interacts with DYSF and JSRP1. Interacts with RYR1. Interacts with STAC, STAC2 and STAC3 (via their SH3 domains). Interacts with CALM. The alpha-1S subunit is found in two isoforms in the skeletal muscle: a minor form of 212 kDa containing the complete amino acid sequence, and a major form of 190 kDa derived from the full-length form by post-translational proteolysis close to Phe-1690. In terms of processing, phosphorylated. Phosphorylation by PKA activates the calcium channel. Both the minor and major forms are phosphorylated in vitro by PKA. Phosphorylation at Ser-1575 is involved in beta-adrenergic-mediated regulation of the channel.

The protein resides in the cell membrane. It is found in the sarcolemma. The protein localises to the T-tubule. The catalysed reaction is Ca(2+)(in) = Ca(2+)(out). Channel activity is blocked by dihydropyridines (DHP), phenylalkylamines, and by benzothiazepines. Pore-forming, alpha-1S subunit of the voltage-gated calcium channel that gives rise to L-type calcium currents in skeletal muscle. Calcium channels containing the alpha-1S subunit play an important role in excitation-contraction coupling in skeletal muscle via their interaction with RYR1, which triggers Ca(2+) release from the sarcplasmic reticulum and ultimately results in muscle contraction. Long-lasting (L-type) calcium channels belong to the 'high-voltage activated' (HVA) group. The chain is Voltage-dependent L-type calcium channel subunit alpha-1S (Cacna1s) from Mus musculus (Mouse).